The chain runs to 429 residues: Glutamate-1-semialdehyde 2,1-aminomutase (429 aa).

Lysine 267 carries the N6-(pyridoxal phosphate)lysine modification.

It belongs to the class-III pyridoxal-phosphate-dependent aminotransferase family. HemL subfamily. Homodimer. Pyridoxal 5'-phosphate is required as a cofactor.

The protein resides in the cytoplasm. It carries out the reaction (S)-4-amino-5-oxopentanoate = 5-aminolevulinate. It functions in the pathway porphyrin-containing compound metabolism; protoporphyrin-IX biosynthesis; 5-aminolevulinate from L-glutamyl-tRNA(Glu): step 2/2. The polypeptide is Glutamate-1-semialdehyde 2,1-aminomutase (Stenotrophomonas maltophilia (strain R551-3)).